Here is a 209-residue protein sequence, read N- to C-terminus: Probable GTP-binding protein EngB (209 aa).

The EngB-type G domain maps to 12–203 (VSFEIIFVGR…RDRLHEMKRD (192 aa)). GTP contacts are provided by residues 20–27 (GRSNVGKS), 45–49 (GVTLR), 62–65 (DMPG), 142–145 (NKMD), and 179–181 (ISA). Mg(2+) contacts are provided by S27 and T47.

It belongs to the TRAFAC class TrmE-Era-EngA-EngB-Septin-like GTPase superfamily. EngB GTPase family. The cofactor is Mg(2+).

Functionally, necessary for normal cell division and for the maintenance of normal septation. The polypeptide is Probable GTP-binding protein EngB (Methanosarcina barkeri (strain Fusaro / DSM 804)).